A 399-amino-acid chain; its full sequence is S-adenosylmethionine synthase (399 aa).

His17 is a binding site for ATP. Position 19 (Asp19) interacts with Mg(2+). Residue Glu45 participates in K(+) binding. Residues Glu58 and Gln101 each coordinate L-methionine. The interval Gln101–Glu111 is flexible loop. ATP is bound by residues Asp177–Lys179, Arg244–Phe245, Asp253, Arg259–Lys260, Ala276, and Lys280. Asp253 is a binding site for L-methionine. L-methionine is bound at residue Lys284.

It belongs to the AdoMet synthase family. Homotetramer; dimer of dimers. The cofactor is Mg(2+). K(+) is required as a cofactor.

It localises to the cytoplasm. The catalysed reaction is L-methionine + ATP + H2O = S-adenosyl-L-methionine + phosphate + diphosphate. Its pathway is amino-acid biosynthesis; S-adenosyl-L-methionine biosynthesis; S-adenosyl-L-methionine from L-methionine: step 1/1. Functionally, catalyzes the formation of S-adenosylmethionine (AdoMet) from methionine and ATP. The overall synthetic reaction is composed of two sequential steps, AdoMet formation and the subsequent tripolyphosphate hydrolysis which occurs prior to release of AdoMet from the enzyme. The polypeptide is S-adenosylmethionine synthase (Listeria monocytogenes serotype 4b (strain CLIP80459)).